The following is a 390-amino-acid chain: Phosphoglycerate kinase (390 aa).

Residues 21–23 (DLN), Arg-36, 59–62 (HLGR), Arg-114, and Arg-147 each bind substrate. ATP contacts are provided by residues Lys-198, Glu-314, and 340–343 (GGDT).

This sequence belongs to the phosphoglycerate kinase family. In terms of assembly, monomer.

Its subcellular location is the cytoplasm. The catalysed reaction is (2R)-3-phosphoglycerate + ATP = (2R)-3-phospho-glyceroyl phosphate + ADP. The protein operates within carbohydrate degradation; glycolysis; pyruvate from D-glyceraldehyde 3-phosphate: step 2/5. This is Phosphoglycerate kinase (pgk) from Buchnera aphidicola subsp. Acyrthosiphon pisum (strain APS) (Acyrthosiphon pisum symbiotic bacterium).